Reading from the N-terminus, the 388-residue chain is 5-hydroxytryptamine receptor 4 (388 aa).

The Extracellular portion of the chain corresponds to 1–19 (MDKLDANVSSEEGFGSVEK). Asn7 carries N-linked (GlcNAc...) asparagine glycosylation. Residues 20 to 44 (VVLLTFLSTVILMAILGNLLVMVAV) form a helical membrane-spanning segment. At 45–54 (CWDRQLRKIK) the chain is on the cytoplasmic side. The helical transmembrane segment at 55 to 78 (TNYFIVSLAFADLLVSVLVMPFGA) threads the bilayer. At 79-92 (IELVQDIWIYGEVF) the chain is on the extracellular side. Residues 93 to 117 (CLVRTSLDVLLTTASIFHLCCISLD) form a helical membrane-spanning segment. An intrachain disulfide couples Cys93 to Cys184. Residue Asp100 coordinates serotonin. At 118 to 133 (RYYAICCQPLVYRNKM) the chain is on the cytoplasmic side. A helical transmembrane segment spans residues 134–157 (TPLRIALMLGGCWVIPTFISFLPI). Topologically, residues 158–188 (MQGWNNIGIIDLIEKRKFNQNSNSTYCVFMV) are extracellular. The chain crosses the membrane as a helical span at residues 189–212 (NKPYAITCSVVAFYIPFLLMVLAY). Residues 213-257 (YRIYVTAKEHAHQIQMLQRAGASSESRPQSADQHSTHRMRTETKA) are Cytoplasmic-facing. The helical transmembrane segment at 258–283 (AKTLCIIMGCFCLCWAPFFVTNIVDP) threads the bilayer. A serotonin-binding site is contributed by Asn279. Residues 284–290 (FIDYTVP) lie on the Extracellular side of the membrane. The chain crosses the membrane as a helical span at residues 291-314 (GQVWTAFLWLGYINSGLNPFLYAF). Residues 315–388 (LNKSFRRAFL…PLVAAQPSDT (74 aa)) are Cytoplasmic-facing.

Belongs to the G-protein coupled receptor 1 family. In terms of assembly, interacts (via C-terminus 330-346 AA) with GRK5; this interaction is promoted by 5-HT (serotonin). Interacts with MAGI2, MPP3, NHERF1 and SNX27 isoforms 1 and 2. Forms a complex including NHERF1 and EZR. As to quaternary structure, interacts with PATJ, NOS1 and SEC23A. In terms of tissue distribution, expressed in ileum, brain, and atrium, but not in the ventricle. Mainly expressed in atria and cardiac ventricle. As to expression, expressed in all cardiovascular tissues analyzed.

The protein resides in the cell membrane. Its subcellular location is the endosome membrane. Functionally, G-protein coupled receptor for 5-hydroxytryptamine (serotonin), a biogenic hormone that functions as a neurotransmitter, a hormone and a mitogen. Ligand binding causes a conformation change that triggers signaling via guanine nucleotide-binding proteins (G proteins) and modulates the activity of downstream effectors. HTR4 is coupled to G(s) G alpha proteins and mediates activation of adenylate cyclase activity. The chain is 5-hydroxytryptamine receptor 4 from Homo sapiens (Human).